Consider the following 382-residue polypeptide: Processive diacylglycerol beta-glucosyltransferase (382 aa).

Belongs to the glycosyltransferase 28 family. UgtP subfamily.

The protein resides in the cell membrane. The catalysed reaction is a 1,2-diacyl-3-O-(beta-D-glucopyranosyl)-sn-glycerol + UDP-alpha-D-glucose = a 1,2-diacyl-3-O-(beta-D-Glc-(1-&gt;6)-beta-D-Glc)-sn-glycerol + UDP + H(+). It carries out the reaction a 1,2-diacyl-3-O-(beta-D-Glc-(1-&gt;6)-beta-D-Glc)-sn-glycerol + UDP-alpha-D-glucose = a 1,2-diacyl-3-O-(beta-D-Glc-(1-&gt;6)-beta-D-Glc-(1-&gt;6)-beta-D-Glc)-sn-glycerol + UDP + H(+). The enzyme catalyses a 1,2-diacyl-sn-glycerol + UDP-alpha-D-glucose = a 1,2-diacyl-3-O-(beta-D-glucopyranosyl)-sn-glycerol + UDP + H(+). It functions in the pathway glycolipid metabolism; diglucosyl-diacylglycerol biosynthesis. Processive glucosyltransferase involved in the biosynthesis of both the bilayer- and non-bilayer-forming membrane glucolipids. Is able to successively transfer up to three glucosyl residues to diacylglycerol (DAG), thereby catalyzing the formation of beta-monoglucosyl-DAG (3-O-(beta-D-glucopyranosyl)-1,2-diacyl-sn-glycerol), beta-diglucosyl-DAG (3-O-(beta-D-glucopyranosyl-beta-(1-&gt;6)-D-glucopyranosyl)-1,2-diacyl-sn-glycerol) and beta-triglucosyl-DAG (3-O-(beta-D-glucopyranosyl-beta-(1-&gt;6)-D-glucopyranosyl-beta-(1-&gt;6)-D-glucopyranosyl)-1,2-diacyl-sn-glycerol). Beta-diglucosyl-DAG is the predominant glycolipid found in Bacillales and is also used as a membrane anchor for lipoteichoic acid (LTA). Also seems to be able to form beta-tetraglucosyl-DAG, although this glycolipid has not been found in B.subtilis membrane. UgtP can only use UDP-glucose as sugar donor. The protein is Processive diacylglycerol beta-glucosyltransferase of Bacillus subtilis (strain 168).